Here is a 238-residue protein sequence, read N- to C-terminus: 14-3-3 protein 2 (238 aa).

The protein belongs to the 14-3-3 family.

In terms of biological role, probable adapter protein. The chain is 14-3-3 protein 2 from Entamoeba histolytica (strain ATCC 30459 / HM-1:IMSS / ABRM).